The chain runs to 295 residues: Small ribosomal subunit protein uS2 (295 aa).

The disordered stretch occupies residues 247 to 295 (TDKGLTSKNVSKLKQTKKFSKTKNIDEETNTEFEQALNDADENKNSDNA).

The protein belongs to the universal ribosomal protein uS2 family.

This chain is Small ribosomal subunit protein uS2, found in Rickettsia conorii (strain ATCC VR-613 / Malish 7).